Here is a 482-residue protein sequence, read N- to C-terminus: UDP-N-acetylmuramate--L-alanine ligase (482 aa).

The segment at M1 to Q26 is disordered. An ATP-binding site is contributed by G140 to T146.

Belongs to the MurCDEF family.

Its subcellular location is the cytoplasm. The enzyme catalyses UDP-N-acetyl-alpha-D-muramate + L-alanine + ATP = UDP-N-acetyl-alpha-D-muramoyl-L-alanine + ADP + phosphate + H(+). Its pathway is cell wall biogenesis; peptidoglycan biosynthesis. Cell wall formation. This chain is UDP-N-acetylmuramate--L-alanine ligase, found in Deinococcus radiodurans (strain ATCC 13939 / DSM 20539 / JCM 16871 / CCUG 27074 / LMG 4051 / NBRC 15346 / NCIMB 9279 / VKM B-1422 / R1).